Reading from the N-terminus, the 202-residue chain is Large ribosomal subunit protein bL25 (202 aa).

It belongs to the bacterial ribosomal protein bL25 family. CTC subfamily. In terms of assembly, part of the 50S ribosomal subunit; part of the 5S rRNA/L5/L18/L25 subcomplex. Contacts the 5S rRNA. Binds to the 5S rRNA independently of L5 and L18.

Its function is as follows. This is one of the proteins that binds to the 5S RNA in the ribosome where it forms part of the central protuberance. This chain is Large ribosomal subunit protein bL25, found in Rickettsia bellii (strain OSU 85-389).